Consider the following 139-residue polypeptide: Small ribosomal subunit protein uS12 (139 aa).

Asp-102 carries the post-translational modification 3-methylthioaspartic acid. The disordered stretch occupies residues 116-139 (DTTGVAKRSQGRSKYGAKRPKKSK). The segment covering 124–139 (SQGRSKYGAKRPKKSK) has biased composition (basic residues).

The protein belongs to the universal ribosomal protein uS12 family. Part of the 30S ribosomal subunit. Contacts proteins S8 and S17. May interact with IF1 in the 30S initiation complex.

Its function is as follows. With S4 and S5 plays an important role in translational accuracy. In terms of biological role, interacts with and stabilizes bases of the 16S rRNA that are involved in tRNA selection in the A site and with the mRNA backbone. Located at the interface of the 30S and 50S subunits, it traverses the body of the 30S subunit contacting proteins on the other side and probably holding the rRNA structure together. The combined cluster of proteins S8, S12 and S17 appears to hold together the shoulder and platform of the 30S subunit. The sequence is that of Small ribosomal subunit protein uS12 from Mesomycoplasma hyopneumoniae (strain 7448) (Mycoplasma hyopneumoniae).